We begin with the raw amino-acid sequence, 224 residues long: MGIRDWPAAERPREKLLEQGASALSDAELLAIFLRTGVAGQTAVDLARHLLNDFGGLRALLEADRAAFSRRLGLGPAKFAQLQAVLEMSRRHLAERLRRDPALESPQAVRDYLKARLRHEPHEVFGCLFLDAKHRVLAFEVLFQGTVDGASVYPRQVLKRALAHNAAALILTHNHPSGIAEPSQADFSLTRRLKEALALVDVRVLDHFIVGDGEPLSMAEQGWL.

The MPN domain maps to 102–224; the sequence is ALESPQAVRD…PLSMAEQGWL (123 aa). The Zn(2+) site is built by His173, His175, and Asp186. A JAMM motif motif is present at residues 173-186; that stretch reads HNHPSGIAEPSQAD.

Belongs to the UPF0758 family.

The sequence is that of UPF0758 protein Avin_02940 from Azotobacter vinelandii (strain DJ / ATCC BAA-1303).